The primary structure comprises 408 residues: MSLSVTRENFDEWMVPVYVPAPFIPVRGEGSRLWDQQGKEYIDFAGGIAVNALGHAHPALREALNEQANRFWHTGNGYTNEPALRLAKKLIDATFAERVFFCNSGAEANEAALKLARKYAHDRIGNHKSGIVAFKNAFHGRTLFTVSAGGQPSYSQDFAPLPPDIRHAAYNDLNSASALIDDNTCAVIVEPVQGEGGVIPATKAFLQGLRELCDRHQALLIFDEVQTGVGRTGELYAYMHYGVTPDILTTAKALGGGFPIGAMLTTQDYASVMTPGTHGTTYGGNPLATAVAGKVLDIINTPEMQNGVRQRHDAFIERLNTINVRFGMFSEIRGLGLLLGCVLQTEFAGKAKLIAQEAAKAGVMVLIAGGDVVRFAPALNVSDEEIATGLDRFALACERLQTGGAPCG.

At lysine 252 the chain carries N6-(pyridoxal phosphate)lysine.

The protein belongs to the class-III pyridoxal-phosphate-dependent aminotransferase family. AstC subfamily. Requires pyridoxal 5'-phosphate as cofactor.

The catalysed reaction is N(2)-succinyl-L-ornithine + 2-oxoglutarate = N-succinyl-L-glutamate 5-semialdehyde + L-glutamate. The protein operates within amino-acid degradation; L-arginine degradation via AST pathway; L-glutamate and succinate from L-arginine: step 3/5. Its function is as follows. Catalyzes the transamination of N(2)-succinylornithine and alpha-ketoglutarate into N(2)-succinylglutamate semialdehyde and glutamate. Can also act as an acetylornithine aminotransferase. The polypeptide is Succinylornithine transaminase (Salmonella paratyphi B (strain ATCC BAA-1250 / SPB7)).